Reading from the N-terminus, the 358-residue chain is Arginine kinase (358 aa).

Residues 6 to 88 (SVEELWAKLD…LDAVIKEYHK (83 aa)) enclose the Phosphagen kinase N-terminal domain. Substrate is bound at residue 61–65 (GVGIY). The Phosphagen kinase C-terminal domain maps to 116 to 353 (YIVSTRVRVG…EACLAKEKEL (238 aa)). ATP is bound by residues 119-123 (STRVR) and His-182. Position 222 (Glu-222) interacts with substrate. Arg-226 contributes to the ATP binding site. Cys-269 contacts substrate. ATP is bound by residues 278–282 (RASVH) and 306–311 (RGIHGE). Residue Glu-311 coordinates substrate.

Belongs to the ATP:guanido phosphotransferase family. In terms of assembly, monomer.

The catalysed reaction is L-arginine + ATP = N(omega)-phospho-L-arginine + ADP + H(+). The chain is Arginine kinase from Haliotis madaka (Giant abalone).